Reading from the N-terminus, the 715-residue chain is MFNIHSVEIDWGGRPLKLETGKIARQADGAVVATYGETVVLATVVAAKSAKEGVDFLPLTVDYIEKTYAAGRIPGGYFKREGRPTEKETLVSRLIDRPIRPLFVDGWRNETQVIVTVLSHDMENDPDILALVASSAALTLSGAPFKGPIGAARVGFINDEYVLNPTLDEMVDTQLDLVVAGTADAVLMVESEAKELNEDIMLGAVMFGHRHFQPVVQAIIELAEKAAKEPREVAVVDESVLEKEILGLIEPELRAAYAIPVKQDRYAAVGKAKEKVMAHYFPEGQEPQYDKLRIAGVFKELEAKIVRWNILDTGKRIDGRDSKTVRNIVAQVGVLPRAHGSALFTRGETQALVVTTLGTGEDEQYIDSLSGTYKETFLLHYNFPPYSVGETGRMGGTKRREIGHGKLAWRAIHPVLPPHHEFPYTLRVVSEITESNGSSSMASVCGASLALMDAGVPLKRPTAGIAMGLILEGERFAVLSDILGDEDHLGDMDFKVAGTEQGITSLQMDIKIAGITEEIMKVALGQAKDGRIHILGEMSKALTNARAELGEYAPRIETFKIATDKIREVIGTGGKVIREIVEKTGAKVNIDDDGTVKVASSDGESIKAAIKWIKSIASDPELNAIYDGTVVKVMEFGAFVNFFGAKDGLVHISQLAAGRVQKTSDVVKEGDKVKVKLLGFDDRGKTRLSMKVVDQETGEDLEAKQKAAEGATAAE.

Mg(2+)-binding residues include aspartate 487 and aspartate 493. The KH domain occupies 554–613; it reads PRIETFKIATDKIREVIGTGGKVIREIVEKTGAKVNIDDDGTVKVASSDGESIKAAIKWI. One can recognise an S1 motif domain in the interval 623-691; it reads NAIYDGTVVK…DRGKTRLSMK (69 aa). Residues 696–715 form a disordered region; it reads ETGEDLEAKQKAAEGATAAE.

This sequence belongs to the polyribonucleotide nucleotidyltransferase family. Requires Mg(2+) as cofactor.

Its subcellular location is the cytoplasm. It catalyses the reaction RNA(n+1) + phosphate = RNA(n) + a ribonucleoside 5'-diphosphate. Involved in mRNA degradation. Catalyzes the phosphorolysis of single-stranded polyribonucleotides processively in the 3'- to 5'-direction. This Rhodopseudomonas palustris (strain BisB18) protein is Polyribonucleotide nucleotidyltransferase.